The sequence spans 234 residues: MSTKSMIRDVELAEEVLSKKAGGPQGSRSCWCLSLFSFLLVAGATTLFCLLHFGVIGPQREEQSPAGPSFNRPLVQTLRSSSQASSNKPVAHVVANISAPGQLRWGDSYANALKANGVELKDNQLVVPTDGLYLIYSQVLFRGHGCPSTPLFLTHTISRIAVSYQTKVNILSAIKSPCHRETPEGAEAKPWYEPIYQGGVFQLEKGDRLSAEINQPEYLDYAESGQVYFGIIAL.

At 1–35 (MSTKSMIRDVELAEEVLSKKAGGPQGSRSCWCLSL) the chain is on the cytoplasmic side. Ser2 carries the post-translational modification Phosphoserine; by CK1. 2 N6-myristoyl lysine lipidation sites follow: Lys19 and Lys20. Residues 36 to 56 (FSFLLVAGATTLFCLLHFGVI) form a helical; Signal-anchor for type II membrane protein membrane-spanning segment. Residues 57 to 233 (GPQREEQSPA…SGQVYFGIIA (177 aa)) lie on the Extracellular side of the membrane. Ser81 is a glycosylation site (O-linked (GalNAc...) serine; in soluble form). One can recognise a THD domain in the interval 89 to 234 (PVAHVVANIS…GQVYFGIIAL (146 aa)). Asn96 carries an N-linked (GlcNAc...) asparagine glycan. Cys146 and Cys178 are joined by a disulfide.

It belongs to the tumor necrosis factor family. As to quaternary structure, homotrimer. Interacts with SPPL2B. The soluble form derives from the membrane form by proteolytic processing. The membrane-bound form is further proteolytically processed by SPPL2A or SPPL2B through regulated intramembrane proteolysis producing TNF intracellular domains (ICD1 and ICD2) released in the cytosol and TNF C-domain 1 and C-domain 2 secreted into the extracellular space. In terms of processing, the membrane form, but not the soluble form, is phosphorylated on serine residues. Dephosphorylation of the membrane form occurs by binding to soluble TNFRSF1A/TNFR1. Post-translationally, O-glycosylated; glycans contain galactose, N-acetylgalactosamine and N-acetylneuraminic acid. The soluble form is demyristoylated by SIRT6, promoting its secretion.

The protein localises to the cell membrane. Its subcellular location is the membrane. The protein resides in the secreted. Cytokine that binds to TNFRSF1A/TNFR1 and TNFRSF1B/TNFBR. It is mainly secreted by macrophages and can induce cell death of certain tumor cell lines. It is potent pyrogen causing fever by direct action or by stimulation of interleukin-1 secretion and is implicated in the induction of cachexia, Under certain conditions it can stimulate cell proliferation and induce cell differentiation. Induces insulin resistance in adipocytes via inhibition of insulin-induced IRS1 tyrosine phosphorylation and insulin-induced glucose uptake. Induces GKAP42 protein degradation in adipocytes which is partially responsible for TNF-induced insulin resistance. Plays a role in angiogenesis by inducing VEGF production synergistically with IL1B and IL6. Promotes osteoclastogenesis and therefore mediates bone resorption. Functionally, the TNF intracellular domain (ICD) form induces IL12 production in dendritic cells. The chain is Tumor necrosis factor (TNF) from Capra hircus (Goat).